Here is a 244-residue protein sequence, read N- to C-terminus: tRNA (guanine-N(1)-)-methyltransferase (244 aa).

Residues Gly-120 and 140 to 145 (IGDYIL) contribute to the S-adenosyl-L-methionine site.

Belongs to the RNA methyltransferase TrmD family. In terms of assembly, homodimer.

The protein localises to the cytoplasm. It catalyses the reaction guanosine(37) in tRNA + S-adenosyl-L-methionine = N(1)-methylguanosine(37) in tRNA + S-adenosyl-L-homocysteine + H(+). In terms of biological role, specifically methylates guanosine-37 in various tRNAs. This chain is tRNA (guanine-N(1)-)-methyltransferase, found in Brucella abortus (strain S19).